The chain runs to 296 residues: L-isoleucine 3(1)-dioxygenase (296 aa).

Positions 176, 178, and 267 each coordinate Fe cation.

The protein belongs to the iron/ascorbate-dependent oxidoreductase family. L-ascorbate is required as a cofactor. Fe(2+) serves as cofactor.

The catalysed reaction is L-isoleucine + 2-oxoglutarate + O2 = 3(1)-hydroxy-L-isoleucine + succinate + CO2. Its function is as follows. Catalyzes the hydroxylation of L-isoleucine at the C-4' position to form L-4'-hydroxyisoleucine (4'-HIL). Exhibits low activity with L-valine and L-methionine. This Pantoea ananatis (strain AJ13355) protein is L-isoleucine 3(1)-dioxygenase.